Reading from the N-terminus, the 603-residue chain is Prostaglandin G/H synthase 1 (603 aa).

Residues methionine 1–proline 27 form the signal peptide. Residues proline 35–threonine 73 enclose the EGF-like domain. 4 cysteine pairs are disulfide-bonded: cysteine 39/cysteine 50, cysteine 40/cysteine 162, cysteine 44/cysteine 60, and cysteine 62/cysteine 72. 3 N-linked (GlcNAc...) asparagine glycosylation sites follow: asparagine 71, asparagine 107, and asparagine 147. Residue histidine 210 is the Proton acceptor of the active site. Residue tyrosine 388 is the For cyclooxygenase activity of the active site. Position 391 (histidine 391) interacts with heme b. A disulfide bridge connects residues cysteine 572 and cysteine 578.

Belongs to the prostaglandin G/H synthase family. In terms of assembly, homodimer. Requires heme b as cofactor. N-glycosylated. N-linked glycosylation is necessary for enzymatic activity. Brain cortex. Isoform 2 is expressed in the cerebral cortex and heart.

The protein resides in the microsome membrane. It localises to the endoplasmic reticulum membrane. It catalyses the reaction (5Z,8Z,11Z,14Z)-eicosatetraenoate + AH2 + 2 O2 = prostaglandin H2 + A + H2O. The catalysed reaction is (5Z,8Z,11Z,14Z)-eicosatetraenoate + 2 O2 = prostaglandin G2. It carries out the reaction prostaglandin G2 + AH2 = prostaglandin H2 + A + H2O. The enzyme catalyses (9Z,12Z)-octadecadienoate + AH2 + O2 = (9R)-hydroxy-(10E,12Z)-octadecadienoate + A + H2O. It catalyses the reaction (9Z,12Z)-octadecadienoate + AH2 + O2 = (9S)-hydroxy-(10E,12Z)-octadecadienoate + A + H2O. The catalysed reaction is (9Z,12Z)-octadecadienoate + AH2 + O2 = (13S)-hydroxy-(9Z,11E)-octadecadienoate + A + H2O. It carries out the reaction (9Z,12Z)-octadecadienoate + AH2 + O2 = (13R)-hydroxy-(9Z,11E)-octadecadienoate + A + H2O. The protein operates within lipid metabolism; prostaglandin biosynthesis. The cyclooxygenase activity is inhibited by nonsteroidal anti-inflammatory drugs (NSAIDs) including ibuprofen, flurbiprofen, ketoprofen, naproxen, flurbiprofen, anirolac, fenclofenac and diclofenac. Functionally, dual cyclooxygenase and peroxidase that plays an important role in the biosynthesis pathway of prostanoids, a class of C20 oxylipins mainly derived from arachidonate ((5Z,8Z,11Z,14Z)-eicosatetraenoate, AA, C20:4(n-6)), with a particular role in the inflammatory response. The cyclooxygenase activity oxygenates AA to the hydroperoxy endoperoxide prostaglandin G2 (PGG2), and the peroxidase activity reduces PGG2 to the hydroxy endoperoxide prostaglandin H2 (PGH2), the precursor of all 2-series prostaglandins and thromboxanes. This complex transformation is initiated by abstraction of hydrogen at carbon 13 (with S-stereochemistry), followed by insertion of molecular O2 to form the endoperoxide bridge between carbon 9 and 11 that defines prostaglandins. The insertion of a second molecule of O2 (bis-oxygenase activity) yields a hydroperoxy group in PGG2 that is then reduced to PGH2 by two electrons. Involved in the constitutive production of prostanoids in particular in the stomach and platelets. In gastric epithelial cells, it is a key step in the generation of prostaglandins, such as prostaglandin E2 (PGE2), which plays an important role in cytoprotection. In platelets, it is involved in the generation of thromboxane A2 (TXA2), which promotes platelet activation and aggregation, vasoconstriction and proliferation of vascular smooth muscle cells. Can also use linoleate (LA, (9Z,12Z)-octadecadienoate, C18:2(n-6)) as substrate and produce hydroxyoctadecadienoates (HODEs) in a regio- and stereospecific manner, being (9R)-HODE ((9R)-hydroxy-(10E,12Z)-octadecadienoate) and (13S)-HODE ((13S)-hydroxy-(9Z,11E)-octadecadienoate) its major products. This chain is Prostaglandin G/H synthase 1 (PTGS1), found in Canis lupus familiaris (Dog).